Reading from the N-terminus, the 143-residue chain is Anti-sigma F factor (143 aa).

Belongs to the anti-sigma-factor family.

The enzyme catalyses L-seryl-[protein] + ATP = O-phospho-L-seryl-[protein] + ADP + H(+). It catalyses the reaction L-threonyl-[protein] + ATP = O-phospho-L-threonyl-[protein] + ADP + H(+). Its function is as follows. Binds to sigma F and blocks its ability to form an RNA polymerase holoenzyme (E-sigma F). Phosphorylates SpoIIAA on a serine residue. This phosphorylation may enable SpoIIAA to act as an anti-anti-sigma factor that counteracts SpoIIAB and thus releases sigma F from inhibition. The chain is Anti-sigma F factor from Caldanaerobacter subterraneus subsp. tengcongensis (strain DSM 15242 / JCM 11007 / NBRC 100824 / MB4) (Thermoanaerobacter tengcongensis).